We begin with the raw amino-acid sequence, 62 residues long: Photosystem II reaction center protein Z (62 aa).

The next 2 helical transmembrane spans lie at 8–28 (AVFA…VVFA) and 41–61 (FSGT…NSLI).

It belongs to the PsbZ family. As to quaternary structure, PSII is composed of 1 copy each of membrane proteins PsbA, PsbB, PsbC, PsbD, PsbE, PsbF, PsbH, PsbI, PsbJ, PsbK, PsbL, PsbM, PsbT, PsbY, PsbZ, Psb30/Ycf12, at least 3 peripheral proteins of the oxygen-evolving complex and a large number of cofactors. It forms dimeric complexes.

It is found in the plastid. Its subcellular location is the chloroplast thylakoid membrane. Its function is as follows. May control the interaction of photosystem II (PSII) cores with the light-harvesting antenna, regulates electron flow through the 2 photosystem reaction centers. PSII is a light-driven water plastoquinone oxidoreductase, using light energy to abstract electrons from H(2)O, generating a proton gradient subsequently used for ATP formation. The sequence is that of Photosystem II reaction center protein Z from Coffea arabica (Arabian coffee).